A 404-amino-acid chain; its full sequence is MKLPIYLDYAATTPVDPRVAEKMFQYMTMDGIFGNPASRSHRYGWQAEEAVDVARNQVAELINADHREIVFTSGATESNNLAIKGVAHFYNKKGKHIITSKTEHKAVLDTCRQLEREGFEVTYLEPEANGIIPMERLEAAMRDDTILVSIMHVNNEIGVIHDVDAIGELCRSKGIIFHMDAAQSAGKLPIDVQTTKVDLISISGHKMYGPKGIGALYVRRKPRIRLEAQMHGGGHERGMRSGTLATHQIVGLGEAAAIAKAEMATDNARIAKLRDKLWNGIKHIEETYVNGDMTHRVSGSLNVSFNYVEGESLMMALKDLAVSSGSACTSASLEPSYVLRALGLNDEMAHSSIRFSIGRFTTEEEIDHAIETITQSIDKLREMSPLWEMFKDGIDLNQVQWAHH.

Pyridoxal 5'-phosphate is bound by residues 75 to 76 (AT), Asn-155, Gln-183, and 203 to 205 (SGH). Lys-206 is modified (N6-(pyridoxal phosphate)lysine). Position 243 (Thr-243) interacts with pyridoxal 5'-phosphate. The Cysteine persulfide intermediate role is filled by Cys-328. Cys-328 is a [2Fe-2S] cluster binding site.

It belongs to the class-V pyridoxal-phosphate-dependent aminotransferase family. NifS/IscS subfamily. Homodimer. Forms a heterotetramer with IscU, interacts with other sulfur acceptors. It depends on pyridoxal 5'-phosphate as a cofactor.

It is found in the cytoplasm. The catalysed reaction is (sulfur carrier)-H + L-cysteine = (sulfur carrier)-SH + L-alanine. It participates in cofactor biosynthesis; iron-sulfur cluster biosynthesis. Its function is as follows. Master enzyme that delivers sulfur to a number of partners involved in Fe-S cluster assembly, tRNA modification or cofactor biosynthesis. Catalyzes the removal of elemental sulfur atoms from cysteine to produce alanine. Functions as a sulfur delivery protein for Fe-S cluster synthesis onto IscU, an Fe-S scaffold assembly protein, as well as other S acceptor proteins. The chain is Cysteine desulfurase IscS from Shewanella sp. (strain MR-4).